Reading from the N-terminus, the 407-residue chain is MASYKDVKKVVLAYSGGLDTSIILKWLQTELGAEVVTFTADLGQGEELEPARKKAEMLGIKEIYIEDVREEFVRDFVFPMFRANAVYEGVYLLGTSIARPLISKHLIDIARKTGADAIAHGATGKGNDQVRFELSAYALNPDIKIIAPWRDWAFKSRTELLAFAEQHQIPVAKDKKGEAPFSVDANLLHSSSEGKVLEDPAQEAPEYVHMRTISPEAAPDKATVIKVGFRKGDAVSINGVEMSPATLLATLNTYGRDNGIGRLDLVENRFVGMKSRGVYETPGGTILLSAHRAIESITLDRGAAHLKDEIMPRYAELIYYGFWFSPEREMLQALIDKSQEYVEGEVTLKLYKGNVMVIGRESEKSLYSDKLVTFEDDQGAYDQKDAAGFIKLNALRLRTLGKRNLAK.

ATP contacts are provided by residues 13–21 and alanine 40; that span reads AYSGGLDTS. Residues tyrosine 91 and serine 96 each contribute to the L-citrulline site. Glycine 121 contributes to the ATP binding site. L-aspartate contacts are provided by threonine 123, asparagine 127, and aspartate 128. Asparagine 127 contributes to the L-citrulline binding site. The L-citrulline site is built by arginine 131, serine 182, serine 191, glutamate 267, and tyrosine 279.

This sequence belongs to the argininosuccinate synthase family. Type 1 subfamily. In terms of assembly, homotetramer.

It is found in the cytoplasm. It catalyses the reaction L-citrulline + L-aspartate + ATP = 2-(N(omega)-L-arginino)succinate + AMP + diphosphate + H(+). Its pathway is amino-acid biosynthesis; L-arginine biosynthesis; L-arginine from L-ornithine and carbamoyl phosphate: step 2/3. The sequence is that of Argininosuccinate synthase from Rhizobium etli (strain ATCC 51251 / DSM 11541 / JCM 21823 / NBRC 15573 / CFN 42).